Consider the following 205-residue polypeptide: Non-specific lipid transfer protein GPI-anchored 13 (205 aa).

Residues 1 to 24 form the signal peptide; sequence MESRKIKVMATAIALIMVAMVVDA. 4 disulfides stabilise this stretch: cysteine 36–cysteine 77, cysteine 46–cysteine 61, cysteine 62–cysteine 104, and cysteine 75–cysteine 113. N-linked (GlcNAc...) asparagine glycans are attached at residues asparagine 93, asparagine 137, and asparagine 165. The interval 141 to 176 is disordered; the sequence is SASAPTGSASEPTSMSSTPGSSAGNNSGRTTSVPGT. Asparagine 177 is lipidated: GPI-anchor amidated asparagine. The propeptide at 178–205 is removed in mature form; that stretch reads HAQSFSKQWLGLEVVAHFFVIFYIFILV.

The protein belongs to the plant LTP family. Expressed preferentially in expanding leaves and sepals, restricted to the distal side. Expressed at low levels in roots and stems.

It localises to the cell membrane. Probable lipid transfer protein. This chain is Non-specific lipid transfer protein GPI-anchored 13, found in Arabidopsis thaliana (Mouse-ear cress).